A 286-amino-acid chain; its full sequence is Protein FAM87A (286 aa).

A run of 2 helical transmembrane segments spans residues 68–88 (YLHS…ETAL) and 161–181 (SFFV…GDML).

It belongs to the FAM87 family.

It is found in the membrane. This Homo sapiens (Human) protein is Protein FAM87A (FAM87A).